The sequence spans 469 residues: MAIVSLRDVAMVMVTVQVFARGYPETDLVVRLPGQPKVVFRQYAGYVDLDLNAGRSLFYYFVEAEKHPDTKPLTLWLNGGPGCSSVGGGAFTELGPFYPTGYGRGLRINSMSWNKASNLLFVDSPAGVGWSYSNRSSDYNAGDKSAASDMLVFLLRWFDKFPELKSHDLFLTGESYAGHYIPQLADAILSYNSRSSGFKFNIKGIAIGNPLLKLDRDIPAVYEFFWSHGMISEVVGRTIKIQCDFSHYTYAYPHNVSDACNDAIREAGDITTEYVNTFDVLPDLCYPSIALQELRLKQMATKMSMGVDVCMNYERQFYLNIPEVQMALHANRTNLPYSWSLCSNLLNYSAIDVNTNMLPTLKRIIQNKIPVRIFSGDQDSVVPFLGTRTIVGELANDLNFKTTVPYGVWFHKRQVGGWAIEYGNLLTFATVRGAAHAVAYTQPSRALHLFSTFLRGQRLPNKTDIAMHD.

A signal peptide spans 1 to 20 (MAIVSLRDVAMVMVTVQVFA). 3 cysteine pairs are disulfide-bonded: Cys83–Cys342, Cys243–Cys260, and Cys285–Cys310. Asn134 is a glycosylation site (N-linked (GlcNAc...) asparagine). Ser175 is an active-site residue. A glycan (N-linked (GlcNAc...) asparagine) is linked at Asn255. N-linked (GlcNAc...) asparagine glycans are attached at residues Asn331 and Asn347. Active-site residues include Asp379 and His436. Asn461 carries N-linked (GlcNAc...) asparagine glycosylation.

This sequence belongs to the peptidase S10 family. As to expression, expressed in flowers.

The protein resides in the secreted. In terms of biological role, probable carboxypeptidase. The sequence is that of Serine carboxypeptidase-like 41 (SCPL41) from Arabidopsis thaliana (Mouse-ear cress).